The chain runs to 710 residues: E3 ubiquitin-protein ligase TRIM9 (710 aa).

Residues C10 to R50 form an RING-type zinc finger. At T41 the chain carries Phosphothreonine. A phosphoserine mark is found at S44, S46, S49, and S53. B box-type zinc fingers lie at residues A163–P212 and R224–L266. Zn(2+) is bound by residues C168, C171, C193, H198, C229, H232, C252, and H258. A coiled-coil region spans residues H273–K340. Residues I374 to V432 form the COS domain. A Fibronectin type-III domain is found at V440 to V535. The B30.2/SPRY domain occupies S533–F702.

The protein belongs to the TRIM/RBCC family. Interacts with SNAP25. Post-translationally, auto-ubiquitinated.

It is found in the cytoplasm. It localises to the cell projection. The protein localises to the dendrite. The protein resides in the cytoplasmic vesicle. Its subcellular location is the secretory vesicle. It is found in the synaptic vesicle. It localises to the synapse. The protein localises to the cytoskeleton. The enzyme catalyses S-ubiquitinyl-[E2 ubiquitin-conjugating enzyme]-L-cysteine + [acceptor protein]-L-lysine = [E2 ubiquitin-conjugating enzyme]-L-cysteine + N(6)-ubiquitinyl-[acceptor protein]-L-lysine.. Its pathway is protein modification; protein ubiquitination. E3 ubiquitin-protein ligase which ubiquitinates itself in cooperation with an E2 enzyme UBE2D2/UBC4 and serves as a targeting signal for proteasomal degradation. May play a role in regulation of neuronal functions. May act as a regulator of synaptic vesicle exocytosis by controlling the availability of SNAP25 for the SNARE complex formation. This is E3 ubiquitin-protein ligase TRIM9 (TRIM9) from Bos taurus (Bovine).